A 212-amino-acid polypeptide reads, in one-letter code: Protein-L-isoaspartate O-methyltransferase (212 aa).

Ser56 is an active-site residue.

The protein belongs to the methyltransferase superfamily. L-isoaspartyl/D-aspartyl protein methyltransferase family.

The protein localises to the cytoplasm. It carries out the reaction [protein]-L-isoaspartate + S-adenosyl-L-methionine = [protein]-L-isoaspartate alpha-methyl ester + S-adenosyl-L-homocysteine. Its function is as follows. Catalyzes the methyl esterification of L-isoaspartyl residues in peptides and proteins that result from spontaneous decomposition of normal L-aspartyl and L-asparaginyl residues. It plays a role in the repair and/or degradation of damaged proteins. This Myxococcus xanthus (strain DK1622) protein is Protein-L-isoaspartate O-methyltransferase.